A 326-amino-acid polypeptide reads, in one-letter code: Vestitone reductase (326 aa).

NADP(+) is bound by residues 12 to 18, Arg37, and Tyr164; that span reads GGTGFLG.

Belongs to the NAD(P)-dependent epimerase/dehydratase family. Dihydroflavonol-4-reductase subfamily. In terms of assembly, monomer. As to expression, detected in roots, and at lower levels in root nodules. Not detected in petioles, leaf and stem.

The catalysed reaction is a (3R,4R)-4,2'-dihydroxyisoflavan + NADP(+) = a (3R)-2'-hydroxyisoflavanone + NADPH + H(+). Inhibited by vestitone concentrations above 50 uM. Functionally, stereospecific enzyme that catalyzes the NADPH-dependent reduction of (3R)-vestitone to (3R,4R)-4'-methoxyisoflavan-2',4,7-triol (DMI). Has no activity with (3S)-vestitone. Catalyzes the penultimate step in the biosynthesis of the phytoalexin medicarpin, and thereby contributes to plant defense reactions. This chain is Vestitone reductase, found in Medicago sativa (Alfalfa).